Here is a 661-residue protein sequence, read N- to C-terminus: Acetyl-coenzyme A synthetase (661 aa).

Residues R199–K202 and T317 contribute to the CoA site. ATP-binding positions include G393–P395, D417–T422, D508, and R523. Position 531 (S531) interacts with CoA. R534 contributes to the ATP binding site. R596 provides a ligand contact to CoA.

This sequence belongs to the ATP-dependent AMP-binding enzyme family.

It catalyses the reaction acetate + ATP + CoA = acetyl-CoA + AMP + diphosphate. The protein is Acetyl-coenzyme A synthetase (ACS-1) of Coprinopsis cinerea (Inky cap fungus).